A 122-amino-acid polypeptide reads, in one-letter code: Small ribosomal subunit protein uS13 (122 aa).

Residues 95–122 (GLPVHGQRTHTNARTRKGPRRGAVGKKK) are disordered.

The protein belongs to the universal ribosomal protein uS13 family. As to quaternary structure, part of the 30S ribosomal subunit. Forms a loose heterodimer with protein S19. Forms two bridges to the 50S subunit in the 70S ribosome.

Functionally, located at the top of the head of the 30S subunit, it contacts several helices of the 16S rRNA. In the 70S ribosome it contacts the 23S rRNA (bridge B1a) and protein L5 of the 50S subunit (bridge B1b), connecting the 2 subunits; these bridges are implicated in subunit movement. Contacts the tRNAs in the A and P-sites. This chain is Small ribosomal subunit protein uS13, found in Desulfovibrio desulfuricans (strain ATCC 27774 / DSM 6949 / MB).